The following is a 248-amino-acid chain: Probable transcriptional regulatory protein Mpop_0922 (248 aa).

Belongs to the TACO1 family.

Its subcellular location is the cytoplasm. The sequence is that of Probable transcriptional regulatory protein Mpop_0922 from Methylorubrum populi (strain ATCC BAA-705 / NCIMB 13946 / BJ001) (Methylobacterium populi).